A 440-amino-acid chain; its full sequence is Xylose isomerase (440 aa).

Residues H101 and D104 contribute to the active site. E232, E268, H271, D296, D307, D309, and D339 together coordinate Mg(2+).

Belongs to the xylose isomerase family. In terms of assembly, homotetramer. Mg(2+) serves as cofactor.

It localises to the cytoplasm. The enzyme catalyses alpha-D-xylose = alpha-D-xylulofuranose. This Escherichia fergusonii (strain ATCC 35469 / DSM 13698 / CCUG 18766 / IAM 14443 / JCM 21226 / LMG 7866 / NBRC 102419 / NCTC 12128 / CDC 0568-73) protein is Xylose isomerase.